A 585-amino-acid polypeptide reads, in one-letter code: Arginine--tRNA ligase (585 aa).

A 'HIGH' region motif is present at residues 127–137; the sequence is PNTNKPLHVGH.

Belongs to the class-I aminoacyl-tRNA synthetase family. Monomer.

Its subcellular location is the cytoplasm. It catalyses the reaction tRNA(Arg) + L-arginine + ATP = L-arginyl-tRNA(Arg) + AMP + diphosphate. This chain is Arginine--tRNA ligase, found in Borreliella afzelii (strain PKo) (Borrelia afzelii).